A 602-amino-acid polypeptide reads, in one-letter code: Elongation factor 4 (602 aa).

The tr-type G domain maps to 2–184 (NHIRNFSIIA…LIVAKVPAPR (183 aa)). GTP is bound by residues 14–19 (DHGKST) and 131–134 (NKMD).

This sequence belongs to the TRAFAC class translation factor GTPase superfamily. Classic translation factor GTPase family. LepA subfamily.

The protein localises to the cell inner membrane. The catalysed reaction is GTP + H2O = GDP + phosphate + H(+). Its function is as follows. Required for accurate and efficient protein synthesis under certain stress conditions. May act as a fidelity factor of the translation reaction, by catalyzing a one-codon backward translocation of tRNAs on improperly translocated ribosomes. Back-translocation proceeds from a post-translocation (POST) complex to a pre-translocation (PRE) complex, thus giving elongation factor G a second chance to translocate the tRNAs correctly. Binds to ribosomes in a GTP-dependent manner. This chain is Elongation factor 4, found in Paracidovorax citrulli (strain AAC00-1) (Acidovorax citrulli).